The primary structure comprises 372 residues: Ciliary neurotrophic factor receptor subunit alpha (372 aa).

The N-terminal stretch at 1–22 (MAASVPWACCAVLAAAAAAVYT) is a signal peptide. Residues 27–104 (PQEAPHVQYE…WHLRHQVLLH (78 aa)) enclose the Ig-like C2-type domain. A disulfide bridge connects residues cysteine 46 and cysteine 89. Asparagine 60, asparagine 70, asparagine 142, asparagine 190, and asparagine 261 each carry an N-linked (GlcNAc...) asparagine glycan. Fibronectin type-III domains follow at residues 108–205 (PPRE…VKPD) and 206–306 (PPEN…TEEP). The WSXWS motif signature appears at 290 to 294 (WSDWS). Residues 301 to 339 (PWTEEPRHLTTEAQAPETTTSTTSSLAPPPTTKICDPGE) form a disordered region. A compositionally biased stretch (low complexity) spans 311–326 (TEAQAPETTTSTTSSL). Serine 342 carries GPI-anchor amidated serine lipidation. Residues 343-372 (GGGPSIPFLTSVPVTLVLAAAAATANNLLI) constitute a propeptide, removed in mature form.

It belongs to the type I cytokine receptor family. Type 3 subfamily. In terms of assembly, forms a heterotrimer with LIFR and IL6ST. Interacts with heterodimeric neurotropic cytokine composed of CLCF1/CLC and CRLF1/CLF-1. Either alone or in complex with the heterodimer CLCF1-CRLF1 interacts with SORL1; this interaction may promote internalization and lysosomal degradation. In terms of tissue distribution, nervous system.

Its subcellular location is the cell membrane. Functionally, binds to CNTF. The alpha subunit provides the receptor specificity. In Rattus norvegicus (Rat), this protein is Ciliary neurotrophic factor receptor subunit alpha (Cntfr).